Reading from the N-terminus, the 276-residue chain is Vitamin B12-binding protein (276 aa).

Residues 1–20 (MIVRFLCWLTGLLLCTAAYA) form the signal peptide. One can recognise a Fe/B12 periplasmic-binding domain in the interval 24 to 273 (RVISLAPHAT…QLTALSPGSS (250 aa)). An intrachain disulfide couples Cys-186 to Cys-262.

It belongs to the BtuF family. The complex is composed of two ATP-binding proteins (BtuD), two transmembrane proteins (BtuC) and a solute-binding protein (BtuF).

The protein localises to the periplasm. Its function is as follows. Part of the ABC transporter complex BtuCDF involved in vitamin B12 import. Binds vitamin B12 and delivers it to the periplasmic surface of BtuC. In Pectobacterium carotovorum subsp. carotovorum (strain PC1), this protein is Vitamin B12-binding protein.